Reading from the N-terminus, the 83-residue chain is Cell division topological specificity factor (83 aa).

This sequence belongs to the MinE family.

Its function is as follows. Prevents the cell division inhibition by proteins MinC and MinD at internal division sites while permitting inhibition at polar sites. This ensures cell division at the proper site by restricting the formation of a division septum at the midpoint of the long axis of the cell. In Pseudoalteromonas atlantica (strain T6c / ATCC BAA-1087), this protein is Cell division topological specificity factor.